Reading from the N-terminus, the 251-residue chain is uncharacterized protein (251 aa).

This is an uncharacterized protein from Methanothermus fervidus.